The chain runs to 78 residues: Large ribosomal subunit protein bL28 (78 aa).

Residues 1-24 (MSKVCQVTGKRPASGNNVSHAHNK) form a disordered region.

The protein belongs to the bacterial ribosomal protein bL28 family.

This is Large ribosomal subunit protein bL28 from Nitrosococcus oceani (strain ATCC 19707 / BCRC 17464 / JCM 30415 / NCIMB 11848 / C-107).